Reading from the N-terminus, the 239-residue chain is tRNA (guanine-N(7)-)-methyltransferase (239 aa).

4 residues coordinate S-adenosyl-L-methionine: E69, E94, D121, and D144. The active site involves D144. Substrate contacts are provided by residues K148, D180, and 217–220; that span reads TKFE.

This sequence belongs to the class I-like SAM-binding methyltransferase superfamily. TrmB family.

The enzyme catalyses guanosine(46) in tRNA + S-adenosyl-L-methionine = N(7)-methylguanosine(46) in tRNA + S-adenosyl-L-homocysteine. It functions in the pathway tRNA modification; N(7)-methylguanine-tRNA biosynthesis. Functionally, catalyzes the formation of N(7)-methylguanine at position 46 (m7G46) in tRNA. The protein is tRNA (guanine-N(7)-)-methyltransferase of Alcanivorax borkumensis (strain ATCC 700651 / DSM 11573 / NCIMB 13689 / SK2).